Reading from the N-terminus, the 216-residue chain is Protein-L-isoaspartate O-methyltransferase (216 aa).

Residue Ser-61 is part of the active site.

Belongs to the methyltransferase superfamily. L-isoaspartyl/D-aspartyl protein methyltransferase family.

The protein resides in the cytoplasm. The enzyme catalyses [protein]-L-isoaspartate + S-adenosyl-L-methionine = [protein]-L-isoaspartate alpha-methyl ester + S-adenosyl-L-homocysteine. Its function is as follows. Catalyzes the methyl esterification of L-isoaspartyl residues in peptides and proteins that result from spontaneous decomposition of normal L-aspartyl and L-asparaginyl residues. It plays a role in the repair and/or degradation of damaged proteins. The polypeptide is Protein-L-isoaspartate O-methyltransferase (Geobacter metallireducens (strain ATCC 53774 / DSM 7210 / GS-15)).